Consider the following 265-residue polypeptide: 5'-nucleotidase SurE (265 aa).

Residues aspartate 9, aspartate 10, serine 40, and asparagine 96 each coordinate a divalent metal cation.

This sequence belongs to the SurE nucleotidase family. A divalent metal cation is required as a cofactor.

The protein resides in the cytoplasm. It catalyses the reaction a ribonucleoside 5'-phosphate + H2O = a ribonucleoside + phosphate. In terms of biological role, nucleotidase that shows phosphatase activity on nucleoside 5'-monophosphates. The polypeptide is 5'-nucleotidase SurE (Methanothrix thermoacetophila (strain DSM 6194 / JCM 14653 / NBRC 101360 / PT) (Methanosaeta thermophila)).